Reading from the N-terminus, the 685-residue chain is Galactocerebrosidase (685 aa).

The first 42 residues, 1-42 (MAEWLLSASWQRRAKAMTAAAGSAGRAAVPLLLCALLAPGGA), serve as a signal peptide directing secretion. Thr109 contacts substrate. N-linked (GlcNAc...) asparagine glycosylation occurs at Asn143. Positions 151 and 197 each coordinate substrate. Catalysis depends on Glu198, which acts as the Proton donor/acceptor. The Nucleophile role is filled by Glu274. Cys287 and Cys394 are oxidised to a cystine. An N-linked (GlcNAc...) asparagine glycan is attached at Asn379. Substrate is bound at residue Arg396. Residues Asn403, Asn556, Asn559, and Asn602 are each glycosylated (N-linked (GlcNAc...) asparagine).

It belongs to the glycosyl hydrolase 59 family. In terms of tissue distribution, detected in urine. Detected in testis, brain and placenta (at protein level). Detected in kidney and liver.

Its subcellular location is the lysosome. The catalysed reaction is a beta-D-galactosyl-(1&lt;-&gt;1')-N-acylsphing-4-enine + H2O = an N-acylsphing-4-enine + D-galactose. It catalyses the reaction beta-D-galactosyl-(1&lt;-&gt;1)-sphing-4-enine + H2O = sphing-4-enine + D-galactose. It carries out the reaction a D-galactosylceramide + H2O = an N-acyl-sphingoid base + D-galactose. In terms of biological role, hydrolyzes the galactose ester bonds of glycolipids such as galactosylceramide and galactosylsphingosine. Enzyme with very low activity responsible for the lysosomal catabolism of galactosylceramide, a major lipid in myelin, kidney and epithelial cells of small intestine and colon. In Homo sapiens (Human), this protein is Galactocerebrosidase.